Reading from the N-terminus, the 386-residue chain is Succinate--CoA ligase [ADP-forming] subunit beta (386 aa).

Residues 9–244 (KEILRSFGVP…LDEEDPAEVE (236 aa)) enclose the ATP-grasp domain. Residues Lys-46, 53 to 55 (GRG), Glu-99, Ala-102, and Glu-107 each bind ATP. Residues Asn-199 and Asp-213 each contribute to the Mg(2+) site. Substrate contacts are provided by residues Asn-264 and 321–323 (GIM).

Belongs to the succinate/malate CoA ligase beta subunit family. Heterotetramer of two alpha and two beta subunits. Requires Mg(2+) as cofactor.

The catalysed reaction is succinate + ATP + CoA = succinyl-CoA + ADP + phosphate. It carries out the reaction GTP + succinate + CoA = succinyl-CoA + GDP + phosphate. Its pathway is carbohydrate metabolism; tricarboxylic acid cycle; succinate from succinyl-CoA (ligase route): step 1/1. Its function is as follows. Succinyl-CoA synthetase functions in the citric acid cycle (TCA), coupling the hydrolysis of succinyl-CoA to the synthesis of either ATP or GTP and thus represents the only step of substrate-level phosphorylation in the TCA. The beta subunit provides nucleotide specificity of the enzyme and binds the substrate succinate, while the binding sites for coenzyme A and phosphate are found in the alpha subunit. The sequence is that of Succinate--CoA ligase [ADP-forming] subunit beta from Acidovorax ebreus (strain TPSY) (Diaphorobacter sp. (strain TPSY)).